The primary structure comprises 383 residues: Putative glutamate--cysteine ligase 2 (383 aa).

This sequence belongs to the glutamate--cysteine ligase type 2 family. YbdK subfamily.

The enzyme catalyses L-cysteine + L-glutamate + ATP = gamma-L-glutamyl-L-cysteine + ADP + phosphate + H(+). ATP-dependent carboxylate-amine ligase which exhibits weak glutamate--cysteine ligase activity. The protein is Putative glutamate--cysteine ligase 2 of Clavibacter michiganensis subsp. michiganensis (strain NCPPB 382).